Consider the following 259-residue polypeptide: UPF0246 protein NGO_0461 (259 aa).

Belongs to the UPF0246 family.

This Neisseria gonorrhoeae (strain ATCC 700825 / FA 1090) protein is UPF0246 protein NGO_0461.